The chain runs to 157 residues: Probable succinate transporter subunit YjjB (157 aa).

Transmembrane regions (helical) follow at residues 10 to 30 (LAQD…VFNV), 55 to 75 (AGFN…SIGI), 87 to 107 (IFTV…TAMI), and 129 to 149 (FLKA…PGLW).

The protein belongs to the ThrE exporter (TC 2.A.79) family. The transporter is composed of YjjB and YjjP.

The protein localises to the cell inner membrane. Functionally, involved in succinate export with YjjP. Both proteins are required for export. Participates in succinate export, but also in the export of other dicarboxylates, such as fumarate and malate. Contributes to succinate production under both aerobic and anaerobic conditions, and increases fumarate and malate production during anaerobic succinate production. This Klebsiella aerogenes (strain ATCC 13048 / DSM 30053 / CCUG 1429 / JCM 1235 / KCTC 2190 / NBRC 13534 / NCIMB 10102 / NCTC 10006 / CDC 819-56) (Enterobacter aerogenes) protein is Probable succinate transporter subunit YjjB.